The following is a 155-amino-acid chain: 6,7-dimethyl-8-ribityllumazine synthase (155 aa).

5-amino-6-(D-ribitylamino)uracil is bound by residues Tyr23, 57–59 (AWE), and 81–83 (CVI). 86-87 (ET) is a (2S)-2-hydroxy-3-oxobutyl phosphate binding site. His89 serves as the catalytic Proton donor. A 5-amino-6-(D-ribitylamino)uracil-binding site is contributed by Phe114. Arg128 is a (2S)-2-hydroxy-3-oxobutyl phosphate binding site.

It belongs to the DMRL synthase family.

It carries out the reaction (2S)-2-hydroxy-3-oxobutyl phosphate + 5-amino-6-(D-ribitylamino)uracil = 6,7-dimethyl-8-(1-D-ribityl)lumazine + phosphate + 2 H2O + H(+). The protein operates within cofactor biosynthesis; riboflavin biosynthesis; riboflavin from 2-hydroxy-3-oxobutyl phosphate and 5-amino-6-(D-ribitylamino)uracil: step 1/2. Catalyzes the formation of 6,7-dimethyl-8-ribityllumazine by condensation of 5-amino-6-(D-ribitylamino)uracil with 3,4-dihydroxy-2-butanone 4-phosphate. This is the penultimate step in the biosynthesis of riboflavin. This is 6,7-dimethyl-8-ribityllumazine synthase from Rhodopirellula baltica (strain DSM 10527 / NCIMB 13988 / SH1).